Here is a 411-residue protein sequence, read N- to C-terminus: Serine hydroxymethyltransferase (411 aa).

(6S)-5,6,7,8-tetrahydrofolate contacts are provided by residues Leu117 and 121 to 123 (GHL). Residue Lys226 is modified to N6-(pyridoxal phosphate)lysine. (6S)-5,6,7,8-tetrahydrofolate contacts are provided by residues Glu241 and 349 to 351 (SPF).

This sequence belongs to the SHMT family. Homodimer. Pyridoxal 5'-phosphate serves as cofactor.

Its subcellular location is the cytoplasm. It carries out the reaction (6R)-5,10-methylene-5,6,7,8-tetrahydrofolate + glycine + H2O = (6S)-5,6,7,8-tetrahydrofolate + L-serine. The protein operates within one-carbon metabolism; tetrahydrofolate interconversion. It functions in the pathway amino-acid biosynthesis; glycine biosynthesis; glycine from L-serine: step 1/1. Catalyzes the reversible interconversion of serine and glycine with tetrahydrofolate (THF) serving as the one-carbon carrier. This reaction serves as the major source of one-carbon groups required for the biosynthesis of purines, thymidylate, methionine, and other important biomolecules. Also exhibits THF-independent aldolase activity toward beta-hydroxyamino acids, producing glycine and aldehydes, via a retro-aldol mechanism. This is Serine hydroxymethyltransferase from Macrococcus caseolyticus (strain JCSC5402) (Macrococcoides caseolyticum).